The primary structure comprises 860 residues: Late endosome and vacuole interface protein 11 (860 aa).

The segment at 19–45 (EIINNSDHSSSHSTSHEEEDEEEDDTE) is disordered. A compositionally biased stretch (low complexity) spans 20-31 (IINNSDHSSSHS). A compositionally biased stretch (acidic residues) spans 35 to 45 (EEEDEEEDDTE). A BED-type zinc finger spans residues 84–138 (KNIAKFWSHFLAIEKKLTKVKCKHCGEILTRSDASLTKTFRSHLKTKHNISANKN). C105, C108, H126, and H131 together coordinate Zn(2+).

It belongs to the VID22 family.

It localises to the nucleus. Functionally, involved in vacuolar processing and morphology. This is Late endosome and vacuole interface protein 11 (ENV11) from Saccharomyces cerevisiae (strain ATCC 204508 / S288c) (Baker's yeast).